The chain runs to 210 residues: Menaquinone reductase, multiheme cytochrome c subunit (210 aa).

The chain crosses the membrane as a helical span at residues 20-40; the sequence is GGAAPFFVGLVVALVFGWWAF. Heme-binding residues include Cys67, Cys70, His71, Cys88, Cys91, His92, Cys140, Cys143, His144, Cys152, Cys155, His156, Cys186, Cys189, His190, Cys205, Cys208, and His209.

It belongs to the multiheme cytochrome c family. The Qrc complex is composed of four subunits: QrcA, QrcB, QrcC and QrcD. Can form a supercomplex with the [NiFe] hydrogenase HynA1 and the tetraheme Type I cytochrome c3 TpIc(3), its physiological electron donors. Heme c is required as a cofactor.

The protein localises to the cell inner membrane. Component of the respiratory Qrc complex, that catalyzes the reduction of the menaquinone pool using electrons transferred from the reduced periplasmic cytochrome c3, and which is probably involved in sulfate respiration. Is likely essential for growth on H(2) or formate since the periplasmic hydrogenases and/or formate dehydrogenases act as primary electron donors for the Qrc complex. The protein is Menaquinone reductase, multiheme cytochrome c subunit of Nitratidesulfovibrio vulgaris (strain ATCC 29579 / DSM 644 / CCUG 34227 / NCIMB 8303 / VKM B-1760 / Hildenborough) (Desulfovibrio vulgaris).